We begin with the raw amino-acid sequence, 313 residues long: Solute carrier family 35 member E3 (313 aa).

A run of 9 helical transmembrane segments spans residues glycine 17–valine 37, glycine 40–isoleucine 60, leucine 77–asparagine 97, phenylalanine 126–leucine 143, phenylalanine 153–valine 173, leucine 187–phenylalanine 206, leucine 225–isoleucine 245, threonine 252–phenylalanine 272, and proline 275–threonine 295.

Belongs to the TPT transporter family. SLC35E subfamily.

It localises to the membrane. Putative transporter. The polypeptide is Solute carrier family 35 member E3 (SLC35E3) (Homo sapiens (Human)).